The following is a 128-amino-acid chain: Sulfurtransferase TusD (128 aa).

The Cysteine persulfide intermediate role is filled by Cys-78.

Belongs to the DsrE/TusD family. As to quaternary structure, heterohexamer, formed by a dimer of trimers. The hexameric TusBCD complex contains 2 copies each of TusB, TusC and TusD. The TusBCD complex interacts with TusE.

The protein localises to the cytoplasm. In terms of biological role, part of a sulfur-relay system required for 2-thiolation of 5-methylaminomethyl-2-thiouridine (mnm(5)s(2)U) at tRNA wobble positions. Accepts sulfur from TusA and transfers it in turn to TusE. The protein is Sulfurtransferase TusD of Shigella boydii serotype 18 (strain CDC 3083-94 / BS512).